The primary structure comprises 488 residues: Bifunctional pantoate ligase/cytidylate kinase (488 aa).

1-8 (MGALHRAH) contacts ATP. Residues 1-251 (MGALHRAHGQ…CGETRLIDHT (251 aa)) are pantoate--beta-alanine ligase. Catalysis depends on histidine 8, which acts as the Proton donor. Glutamine 36 lines the (R)-pantoate pocket. Glutamine 36 contacts beta-alanine. 125–128 (GEKD) is a binding site for ATP. Glutamine 131 is a binding site for (R)-pantoate. ATP contacts are provided by residues valine 154 and 162–165 (CSSR). The tract at residues 252 to 488 (FLMSRQPIVA…PEEVWPTPGS (237 aa)) is cytidylate kinase.

It in the N-terminal section; belongs to the pantothenate synthetase family. The protein in the C-terminal section; belongs to the cytidylate kinase family. Type 1 subfamily.

It is found in the cytoplasm. The catalysed reaction is (R)-pantoate + beta-alanine + ATP = (R)-pantothenate + AMP + diphosphate + H(+). It carries out the reaction CMP + ATP = CDP + ADP. It catalyses the reaction dCMP + ATP = dCDP + ADP. Its pathway is cofactor biosynthesis; (R)-pantothenate biosynthesis; (R)-pantothenate from (R)-pantoate and beta-alanine: step 1/1. In terms of biological role, catalyzes the condensation of pantoate with beta-alanine in an ATP-dependent reaction via a pantoyl-adenylate intermediate. Functionally, catalyzes the transfer of a phosphate group from ATP to either CMP or dCMP to form CDP or dCDP and ADP, respectively. The protein is Bifunctional pantoate ligase/cytidylate kinase of Prochlorococcus marinus (strain MIT 9303).